Reading from the N-terminus, the 242-residue chain is Uridylate kinase (242 aa).

An ATP-binding site is contributed by 17–20 (KLGG). G58 lines the UMP pocket. The ATP site is built by G59 and R63. UMP is bound by residues D78 and 139-146 (MGMPYFST). The ATP site is built by F172 and D175.

Belongs to the UMP kinase family. In terms of assembly, homohexamer.

The protein localises to the cytoplasm. The catalysed reaction is UMP + ATP = UDP + ADP. It participates in pyrimidine metabolism; CTP biosynthesis via de novo pathway; UDP from UMP (UMPK route): step 1/1. With respect to regulation, inhibited by UTP. Functionally, catalyzes the reversible phosphorylation of UMP to UDP. The polypeptide is Uridylate kinase (Rhodococcus jostii (strain RHA1)).